Here is a 299-residue protein sequence, read N- to C-terminus: Prolyl 4-hydroxylase 2 (299 aa).

At methionine 1–arginine 5 the chain is on the cytoplasmic side. The chain crosses the membrane as a helical; Signal-anchor for type II membrane protein span at residues leucine 6–isoleucine 26. The Lumenal segment spans residues serine 27–cysteine 299. The Fe2OG dioxygenase domain occupies asparagine 121–valine 246. Fe cation contacts are provided by histidine 139 and aspartate 141. Asparagine 165 carries N-linked (GlcNAc...) asparagine glycosylation. Histidine 227 is a Fe cation binding site. Position 237 (lysine 237) interacts with 2-oxoglutarate. Residues asparagine 258 and asparagine 263 are each glycosylated (N-linked (GlcNAc...) asparagine). The 41-residue stretch at cysteine 259–cysteine 299 folds into the ShKT domain. 3 disulfides stabilise this stretch: cysteine 259-cysteine 299, cysteine 266-cysteine 292, and cysteine 275-cysteine 296.

Belongs to the P4HA family. The cofactor is Fe(2+). Requires L-ascorbate as cofactor. In terms of tissue distribution, expressed in epidermal root hair cells (trichoblasts).

The protein localises to the endoplasmic reticulum membrane. The protein resides in the golgi apparatus membrane. The catalysed reaction is L-prolyl-[collagen] + 2-oxoglutarate + O2 = trans-4-hydroxy-L-prolyl-[collagen] + succinate + CO2. In terms of biological role, catalyzes the post-translational formation of 4-hydroxyproline in -Xaa-Pro-Gly- sequences in proline-rich peptide sequences of plant glycoproteins and other proteins. Hydroxyprolines are important constituent of many plant cell wall glycoproteins such as extensins, hydroxyproline-rich glycoproteins, lectins and arabinogalactan proteins. Possesses high affinity for leucine-rich repeat and proline-rich extensins of root cell walls that are essential for root hair development. Hydroxyprolines define the subsequent O-glycosylation sites by arabinosyltransferases which elongate the O-arabinosides on extensins. Has low affinity for the substrates tested in vitro. This is Prolyl 4-hydroxylase 2 from Arabidopsis thaliana (Mouse-ear cress).